We begin with the raw amino-acid sequence, 492 residues long: BTB/POZ domain and ankyrin repeat-containing protein NOOT2 (492 aa).

A BTB domain is found at 25–107 (SDVTFQVEGR…LYSGQVSIVP (83 aa)). Residues 113–127 (RPNCGERGCWHTHCT) form a C2HC NPR-type zinc finger. Zn(2+)-binding residues include C116, C121, H123, and C126. ANK repeat units lie at residues 248–277 (QKIR…LNLD), 278–307 (EALA…DVNY), 312–341 (AGKT…DPTV), and 345–379 (DGVT…KLRL). 2 disordered regions span residues 395–439 (ENNA…NSIG) and 455–492 (TQMG…SHDF). Low complexity-rich tracts occupy residues 397 to 413 (NASN…SSAA) and 425 to 439 (SSSS…NSIG). Positions 461–473 (DDNRHNNSHREAM) are enriched in basic and acidic residues.

It belongs to the plant 'ANKYRIN-BTB/POZ' family. 'NOOT-BOP-COCH-like' (NBCL) subfamily. Homodimer.

The protein localises to the nucleus. It is found in the cytoplasm. The protein resides in the cell membrane. The protein operates within protein modification; protein ubiquitination. In terms of biological role, may act as a substrate-specific adapter of an E3 ubiquitin-protein ligase complex (CUL3-RBX1-BTB) which mediates the ubiquitination and subsequent proteasomal degradation of target proteins. Transcriptional co-regulator involved in the promotion of leaf and floral meristem fate and determinacy. Required for the abscission of senescent organs, probably by regulating the cell wall disorganization in abscission zones (AZs, e.g. pulvini at the base of leaves). Involved in the coordination of the symbiotic nodule developmental program; promotes the formation of root nodules by interacting directly with APP1 to modulate the expression of the nuclear transcription factor Y subunit (NF-YA1), a key nodulin. Involved in the regulation of indeterminate nodule identity in association with NOOT1. The chain is BTB/POZ domain and ankyrin repeat-containing protein NOOT2 from Medicago truncatula (Barrel medic).